Here is a 421-residue protein sequence, read N- to C-terminus: Tol-Pal system protein TolA (421 aa).

The Cytoplasmic segment spans residues 1 to 13 (MSKATEQNDKLKR). A helical transmembrane segment spans residues 14-34 (AIIISAVLHVILFAALIWSSF). The Periplasmic portion of the chain corresponds to 35–421 (DENIEASAGG…FKNAPLDFKP (387 aa)). The segment at 48–310 (SSIDAVMVDS…LSSGKNAPKT (263 aa)) is domain II (alpha-helical). The disordered stretch occupies residues 65-266 (KRMQSQESSA…KAAADKKAAA (202 aa)). Basic and acidic residues-rich tracts occupy residues 73 to 175 (SAKR…EAEA) and 206 to 266 (EARK…KAAA). A run of 13 repeats spans residues 224-229 (EKKAAA), 230-234 (EKAAA), 235-240 (DKKAAA), 241-245 (EKAAA), 246-250 (DKKAA), 251-255 (EKAAA), 256-260 (EKAAA), 261-266 (DKKAAA), 267-271 (EKAAA), 272-277 (DKKAAA), 278-282 (AKAAA), 283-287 (EKAAA), and 288-292 (AKAAA). Residues 224 to 292 (EKKAAAEKAA…EKAAAAKAAA (69 aa)) form a 13 X tandem repeats of [EDA]-K(1,2)-A(2,4) region. The interval 300 to 336 (ELSSGKNAPKTGGGAKGNNASPAGSGNTKNNGASGAD) is disordered. A domain III (functional) region spans residues 311-421 (GGGAKGNNAS…FKNAPLDFKP (111 aa)). Residues 317–332 (NNASPAGSGNTKNNGA) are compositionally biased toward polar residues. A disulfide bridge links C363 with C388.

This sequence belongs to the TolA family. The Tol-Pal system is composed of five core proteins: the inner membrane proteins TolA, TolQ and TolR, the periplasmic protein TolB and the outer membrane protein Pal. They form a network linking the inner and outer membranes and the peptidoglycan layer. TolA interacts with TolQ and TolR via its N-terminal domain. Interacts with CpoB, and with the trimeric porins OmpC, OmpF, PhoE and LamB via its central domain. Interacts with TolB via its C-terminal domain. Also interacts with Pal via its C-terminal domain. This interaction is proton motive force dependent and requires TolQ and TolR.

It localises to the cell inner membrane. Its function is as follows. Part of the Tol-Pal system, which plays a role in outer membrane invagination during cell division and is important for maintaining outer membrane integrity. The Tol-Pal system is also required for polar localization of chemoreceptors clusters. The system also appears to be required for the activity of several outer membrane-localized enzymes with cell wall remodeling activity. Is involved in the uptake of group A colicins (colicins A, E1, E2, E3, and K) and in the uptake of filamentous phage DNA. The chain is Tol-Pal system protein TolA from Escherichia coli (strain K12).